A 352-amino-acid polypeptide reads, in one-letter code: S-adenosylmethionine:tRNA ribosyltransferase-isomerase (352 aa).

Belongs to the QueA family. As to quaternary structure, monomer.

The protein localises to the cytoplasm. It carries out the reaction 7-aminomethyl-7-carbaguanosine(34) in tRNA + S-adenosyl-L-methionine = epoxyqueuosine(34) in tRNA + adenine + L-methionine + 2 H(+). Its pathway is tRNA modification; tRNA-queuosine biosynthesis. Functionally, transfers and isomerizes the ribose moiety from AdoMet to the 7-aminomethyl group of 7-deazaguanine (preQ1-tRNA) to give epoxyqueuosine (oQ-tRNA). The protein is S-adenosylmethionine:tRNA ribosyltransferase-isomerase of Vibrio cholerae serotype O1 (strain ATCC 39315 / El Tor Inaba N16961).